We begin with the raw amino-acid sequence, 912 residues long: Nitrate reductase [NADH] (912 aa).

A disordered region spans residues 1–99 (SVEPRQPFGR…PRDEGTADAW (99 aa)). Residues 13–23 (APATAPTARAP) are compositionally biased toward low complexity. Over residues 54–68 (AEEDEEDDDEDDEGH) the composition is skewed to acidic residues. Residues 85 to 94 (PSTRDPRDEG) are compositionally biased toward basic and acidic residues. Cys186 lines the Mo-molybdopterin pocket. In terms of domain architecture, Cytochrome b5 heme-binding spans 535 to 610 (DKQFTMSEVR…LDTYRIGELI (76 aa)). 2 residues coordinate heme: His570 and His593. Residues 651–764 (REKVPCRLVD…KGPLGHVEYT (114 aa)) form the FAD-binding FR-type domain. FAD contacts are provided by residues 703 to 706 (RAYT), 720 to 724 (LVKVY), Phe725, Phe732, 737 to 739 (LMT), Ser788, and Thr791.

The protein belongs to the nitrate reductase family. In terms of assembly, homodimer. FAD serves as cofactor. It depends on heme as a cofactor. Mo-molybdopterin is required as a cofactor.

The enzyme catalyses nitrite + NAD(+) + H2O = nitrate + NADH + H(+). In terms of biological role, nitrate reductase is a key enzyme involved in the first step of nitrate assimilation in plants, fungi and bacteria. The polypeptide is Nitrate reductase [NADH] (Hordeum vulgare (Barley)).